The primary structure comprises 228 residues: NAD(P)H-hydrate epimerase (228 aa).

The YjeF N-terminal domain occupies 9–209 (VRAVERLAHR…LLGLTPAFLA (201 aa)). Residue 53-57 (NNGGD) coordinates (6S)-NADPHX. Residues asparagine 54 and aspartate 115 each coordinate K(+). Residues 119–125 (GIGLARP) and aspartate 148 contribute to the (6S)-NADPHX site. Position 151 (serine 151) interacts with K(+).

Belongs to the NnrE/AIBP family. Requires K(+) as cofactor.

The enzyme catalyses (6R)-NADHX = (6S)-NADHX. It catalyses the reaction (6R)-NADPHX = (6S)-NADPHX. Its function is as follows. Catalyzes the epimerization of the S- and R-forms of NAD(P)HX, a damaged form of NAD(P)H that is a result of enzymatic or heat-dependent hydration. This is a prerequisite for the S-specific NAD(P)H-hydrate dehydratase to allow the repair of both epimers of NAD(P)HX. This Bordetella pertussis (strain CS) protein is NAD(P)H-hydrate epimerase.